The chain runs to 556 residues: MGFWILAILTILMYSTAAKFSKQSWGLENEALIVRCPRQGKPSYTVDWYYSQTNKSIPTQERNRVFASGQLLKFLPAAVADSGIYTCIVRSPTFNRTGYANVTIYKKQSDCNVPDYLMYSTVSGSEKNSKIYCPTIDLYNWTAPLEWFKNCQALQGSRYRAHKSFLVIDNVMTEDAGDYTCKFIHNENGANYSVTATRSFTVKDEQGFSLFPVIGAPAQNEIKEVEIGKNANLTCSACFGKGTQFLAAVLWQLNGTKITDFGEPRIQQEEGQNQSFSNGLACLDMVLRIADVKEEDLLLQYDCLALNLHGLRRHTVRLSRKNPIDHHSIYCIIAVCSVFLMLINVLVIILKMFWIEATLLWRDIAKPYKTRNDGKLYDAYVVYPRNYKSSTDGASRVEHFVHQILPDVLENKCGYTLCIYGRDMLPGEDVVTAVETNIRKSRRHIFILTPQITHNKEFAYEQEVALHCALIQNDAKVILIEMEALSELDMLQAEALQDSLQHLMKVQGTIKWREDHIANKRSLNSKFWKHVRYQMPVPSKIPRKASSLTPLAAQKQ.

The signal sequence occupies residues 1 to 18 (MGFWILAILTILMYSTAA). Ig-like C2-type domains are found at residues 19–103 (KFSK…ANVT) and 114–197 (PDYL…VTAT). At 19 to 328 (KFSKQSWGLE…SRKNPIDHHS (310 aa)) the chain is on the extracellular side. C36 and C87 are oxidised to a cystine. Residues N54, N95, N101, N140, and N191 are each glycosylated (N-linked (GlcNAc...) asparagine). Cystine bridges form between C111-C151 and C133-C181. A flexible linker region spans residues 198 to 211 (RSFTVKDEQGFSLF). Residues 212 to 319 (PVIGAPAQNE…GLRRHTVRLS (108 aa)) form the Ig-like C2-type 3 domain. N232, N254, and N273 each carry an N-linked (GlcNAc...) asparagine glycan. Disulfide bonds link C235/C303 and C238/C282. Residue K321 forms a Glycyl lysine isopeptide (Lys-Gly) (interchain with G-Cter in ubiquitin) linkage. Residues 329–349 (IYCIIAVCSVFLMLINVLVII) form a helical membrane-spanning segment. The Cytoplasmic segment spans residues 350 to 556 (LKMFWIEATL…SLTPLAAQKQ (207 aa)). In terms of domain architecture, TIR spans 375–535 (KLYDAYVVYP…KFWKHVRYQM (161 aa)). E461 is an active-site residue.

Belongs to the interleukin-1 receptor family. Interacts with MYD88, IRAK1, IRAK4, and TRAF6. Bound to its ligand IL-33, interacts with IL1RAP to form the minimal interleukin-33 signaling complex with a 1:1:1 stoichiometry. Interacts with KIT (bound to KITLG/SCF). A mast cell-specific KITLG/SCF-induced interleukin-33 signaling complex contains IL1RL1, IL1RAP, KIT and MYD88. Interacts with TMED1. In terms of processing, ubiquitinated at Lys-321 in a FBXL19-mediated manner; leading to proteasomal degradation. Ubiquitination by TRAF6 via 'Lys-27'-linked polyubiquitination and deubiquitination by USP38 serves as a critical regulatory mechanism for fine-tuning IL1RL1-mediated inflammatory response. As to expression, highly expressed in kidney, lung, placenta, stomach, skeletal muscle, colon and small intestine. Isoform A is prevalently expressed in the lung, testis, placenta, stomach and colon. Isoform B is more abundant in the brain, kidney and the liver. Isoform C is not detected in brain, heart, liver, kidney and skeletal muscle. Expressed on T-cells in fibrotic liver; at protein level. Overexpressed in fibrotic and cirrhotic liver.

It is found in the cell membrane. It localises to the secreted. The enzyme catalyses NAD(+) + H2O = ADP-D-ribose + nicotinamide + H(+). Its function is as follows. Receptor for interleukin-33 (IL-33) which plays crucial roles in innate and adaptive immunity, contributing to tissue homeostasis and responses to environmental stresses together with coreceptor IL1RAP. Its stimulation recruits MYD88, IRAK1, IRAK4, and TRAF6, followed by phosphorylation of MAPK3/ERK1 and/or MAPK1/ERK2, MAPK14, and MAPK8. Possibly involved in helper T-cell function. Upon tissue injury, induces UCP2-dependent mitochondrial rewiring that attenuates the generation of reactive oxygen species and preserves the integrity of Krebs cycle required for persistent production of itaconate and subsequent GATA3-dependent differentiation of inflammation-resolving alternatively activated macrophages. In terms of biological role, inhibits IL-33 signaling. In Homo sapiens (Human), this protein is Interleukin-1 receptor-like 1 (IL1RL1).